Consider the following 65-residue polypeptide: Large ribosomal subunit protein bL28 (65 aa).

This sequence belongs to the bacterial ribosomal protein bL28 family.

This chain is Large ribosomal subunit protein bL28, found in Lachnoclostridium phytofermentans (strain ATCC 700394 / DSM 18823 / ISDg) (Clostridium phytofermentans).